Reading from the N-terminus, the 446-residue chain is Probable inactive lipase MT1628 (446 aa).

This sequence belongs to the AB hydrolase superfamily. Lipase family.

The sequence is that of Probable inactive lipase MT1628 from Mycobacterium tuberculosis (strain CDC 1551 / Oshkosh).